The primary structure comprises 72 residues: Variant surface glycoprotein MITAT 1.1000BC (72 aa).

D50 carries the GPI-anchor amidated aspartate lipid modification. Positions G51–F72 are cleaved as a propeptide — removed in mature form.

It localises to the cell membrane. VSG forms a coat on the surface of the parasite. The trypanosome evades the immune response of the host by expressing a series of antigenically distinct VSGs from an estimated 1000 VSG genes. This Trypanosoma brucei brucei protein is Variant surface glycoprotein MITAT 1.1000BC.